Reading from the N-terminus, the 356-residue chain is Protein-L-isoaspartate O-methyltransferase domain-containing protein 1 (356 aa).

A lipid anchor (N-myristoyl glycine) is attached at G2. S64 is a catalytic residue. 3 adoMet binding motif regions span residues 85–94, 160–164, and 181–191; these read LNLGSGTGYL, YDRIY, and LKVGGILVMPI. Residues 240–250 are BC-box; it reads VRNLQDLARIY. Positions 299-331 are disordered; it reads PLDSEEDEKMEEDKEEEEKEPGEALKPEEPPQN. Positions 301–318 are enriched in acidic residues; the sequence is DSEEDEKMEEDKEEEEKE. The segment covering 319-331 has biased composition (basic and acidic residues); sequence PGEALKPEEPPQN. The CUL-box stretch occupies residues 340-343; that stretch reads LPLP.

Belongs to the methyltransferase superfamily. L-isoaspartyl/D-aspartyl protein methyltransferase family. As to quaternary structure, component of the probable ECS(PCMTD1) E3 ubiquitin-protein ligase complex, at least composed of CUL5, ELOB, ELOC, RBX2 and PCMTD1. Interacts (via the BC-box) with ELOB and ELOC; the interaction is direct and stabilizes PCMTD1.

It is found in the cytoplasm. The protein localises to the membrane. In terms of biological role, substrate recognition component of an ECS (Elongin BC-CUL5-SOCS-box protein) E3 ubiquitin ligase complex which mediates the ubiquitination and subsequent proteasomal degradation of target proteins. Specifically binds to the methyltransferase cofactor S-adenosylmethionine (AdoMet) via the N-terminal AdoMet binding motif, but does not display methyltransferase activity. May provide an alternate maintenance pathway for modified proteins by acting as a damage-specific E3 ubiquitin ligase adaptor protein. In Bos taurus (Bovine), this protein is Protein-L-isoaspartate O-methyltransferase domain-containing protein 1 (PCMTD1).